The sequence spans 158 residues: NAD(P)H-quinone oxidoreductase subunit J, chloroplastic (158 aa).

Belongs to the complex I 30 kDa subunit family. NDH is composed of at least 16 different subunits, 5 of which are encoded in the nucleus.

The protein resides in the plastid. Its subcellular location is the chloroplast thylakoid membrane. It carries out the reaction a plastoquinone + NADH + (n+1) H(+)(in) = a plastoquinol + NAD(+) + n H(+)(out). It catalyses the reaction a plastoquinone + NADPH + (n+1) H(+)(in) = a plastoquinol + NADP(+) + n H(+)(out). Its function is as follows. NDH shuttles electrons from NAD(P)H:plastoquinone, via FMN and iron-sulfur (Fe-S) centers, to quinones in the photosynthetic chain and possibly in a chloroplast respiratory chain. The immediate electron acceptor for the enzyme in this species is believed to be plastoquinone. Couples the redox reaction to proton translocation, and thus conserves the redox energy in a proton gradient. The protein is NAD(P)H-quinone oxidoreductase subunit J, chloroplastic of Guizotia abyssinica (Niger).